We begin with the raw amino-acid sequence, 382 residues long: 1-deoxy-D-xylulose 5-phosphate reductoisomerase (382 aa).

NADPH contacts are provided by threonine 10, glycine 11, serine 12, isoleucine 13, glycine 36, and asparagine 122. Lysine 123 lines the 1-deoxy-D-xylulose 5-phosphate pocket. NADPH is bound at residue glutamate 124. Aspartate 148 is a binding site for Mn(2+). Serine 149, glutamate 150, serine 174, and histidine 197 together coordinate 1-deoxy-D-xylulose 5-phosphate. Glutamate 150 contributes to the Mn(2+) binding site. Glycine 203 serves as a coordination point for NADPH. Serine 210, asparagine 215, lysine 216, and glutamate 219 together coordinate 1-deoxy-D-xylulose 5-phosphate. Residue glutamate 219 coordinates Mn(2+).

Belongs to the DXR family. Requires Mg(2+) as cofactor. Mn(2+) serves as cofactor.

It carries out the reaction 2-C-methyl-D-erythritol 4-phosphate + NADP(+) = 1-deoxy-D-xylulose 5-phosphate + NADPH + H(+). The protein operates within isoprenoid biosynthesis; isopentenyl diphosphate biosynthesis via DXP pathway; isopentenyl diphosphate from 1-deoxy-D-xylulose 5-phosphate: step 1/6. Catalyzes the NADPH-dependent rearrangement and reduction of 1-deoxy-D-xylulose-5-phosphate (DXP) to 2-C-methyl-D-erythritol 4-phosphate (MEP). The polypeptide is 1-deoxy-D-xylulose 5-phosphate reductoisomerase (Pelodictyon phaeoclathratiforme (strain DSM 5477 / BU-1)).